Consider the following 460-residue polypeptide: Mitochondrial distribution and morphology protein 10 (460 aa).

The protein belongs to the MDM10 family. Component of the ER-mitochondria encounter structure (ERMES) or MDM complex, composed of MMM1, MDM10, MDM12 and MDM34. Associates with the mitochondrial outer membrane sorting assembly machinery SAM(core) complex.

It is found in the mitochondrion outer membrane. In terms of biological role, component of the ERMES/MDM complex, which serves as a molecular tether to connect the endoplasmic reticulum and mitochondria. Components of this complex are involved in the control of mitochondrial shape and protein biogenesis and may function in phospholipid exchange. MDM10 is involved in the late assembly steps of the general translocase of the mitochondrial outer membrane (TOM complex). Functions in the TOM40-specific route of the assembly of outer membrane beta-barrel proteins, including the association of TOM40 with the receptor TOM22 and small TOM proteins. Can associate with the SAM(core) complex as well as the MDM12-MMM1 complex, both involved in late steps of the major beta-barrel assembly pathway, that is responsible for biogenesis of all outer membrane beta-barrel proteins. May act as a switch that shuttles between both complexes and channels precursor proteins into the TOM40-specific pathway. Plays a role in mitochondrial morphology and in the inheritance of mitochondria. The chain is Mitochondrial distribution and morphology protein 10 from Candida glabrata (strain ATCC 2001 / BCRC 20586 / JCM 3761 / NBRC 0622 / NRRL Y-65 / CBS 138) (Yeast).